The sequence spans 66 residues: Muscarinic toxin 4 (66 aa).

Disulfide bonds link Cys3–Cys24, Cys17–Cys42, Cys46–Cys58, and Cys59–Cys64.

Belongs to the three-finger toxin family. Short-chain subfamily. Aminergic toxin sub-subfamily. Monomer. As to expression, expressed by the venom gland.

It is found in the secreted. Its function is as follows. Binds to the muscarinic acetylcholine receptor (CHRM). This is Muscarinic toxin 4 from Dendroaspis angusticeps (Eastern green mamba).